The chain runs to 628 residues: Beta-lactamase-like protein 1 (628 aa).

The first 28 residues, 1–28 (MKNILSFSFSFSFLYILFLLLFLNNNLL), serve as a signal peptide directing secretion. N-linked (GlcNAc...) asparagine glycans are attached at residues Asn45, Asn68, Asn198, and Asn241. The span at 245 to 281 (NNNNNNNNNNNNNNNNNNNNNNNNNNNNNNNNNNNNN) shows a compositional bias: low complexity. The segment at 245 to 285 (NNNNNNNNNNNNNNNNNNNNNNNNNNNNNNNNNNNNNKIKT) is disordered. Residues Asn313 and Asn335 are each glycosylated (N-linked (GlcNAc...) asparagine). Positions 494-516 (EKEEKEEEEENQQDESQQQQQQQ) are disordered. The segment covering 496 to 506 (EEKEEEEENQQ) has biased composition (acidic residues). The segment covering 507-516 (DESQQQQQQQ) has biased composition (low complexity).

This sequence belongs to the beta-lactamase family.

Its subcellular location is the secreted. The chain is Beta-lactamase-like protein 1 from Dictyostelium discoideum (Social amoeba).